Consider the following 327-residue polypeptide: Gamma-resorcylate decarboxylase (327 aa).

Residues E8 and H10 each coordinate Zn(2+). 2,6-dihydroxybenzoate is bound by residues F23, H164, and D287. Zn(2+)-binding residues include H164 and D287. D287 is a catalytic residue.

Belongs to the metallo-dependent hydrolases superfamily. ACMSD family. As to quaternary structure, homotetramer. Dimer of dimers. The cofactor is Zn(2+).

It catalyses the reaction 2,6-dihydroxybenzoate + H(+) = resorcinol + CO2. The enzyme catalyses 2,3-dihydroxybenzoate + H(+) = catechol + CO2. It participates in aromatic compound metabolism. Inhibited by CuCl(2), monoiodoacetate and diethylpyrocarbonate. Inhibited by 2,3-dihydroxybenzaldehyde, which is an analog of the substrate 2,3-dihydroxybenzoate. Its function is as follows. Involved in the gamma-resorcylate (2,6-dihydroxybenzoate) catabolism. Catalyzes the reversible decarboxylation of gamma-resorcylate to resorcinol. The reaction is reversible, but equilibrium greatly favors the decarboxylation reaction. Also catalyzes the decarboxylation of 2,3-dihydroxybenzoate to catechol, but does not act on 2,4-dihydroxybenzoate, 2,5-dihydroxybenzoate, 3,4-dihydroxybenzoate, 3,5-dihydroxybenzoate, 2-hydroxybenzoate, or 3-hydroxybenzoate. Only resorcinol is carboxylated by the reverse reaction. The polypeptide is Gamma-resorcylate decarboxylase (Rhizobium sp. (strain MTP-10005)).